The sequence spans 445 residues: MPFIATTESERTEMLQAIGVNSFDELIADIPYSVRLQRALELLPSLDEPQVRRLLERMAASNRCTAEYVSFLGGGAYDHFIPSAIKTIISRSEFYTAYTPYQAEVSQGTLQAIYEYQSLMCRLYGMDVANASMYDGATALAEAVLMAMNVTGRDQVVVAGKLHPHTTAVLKTYLEASGHQAIIQNALVDGRSDIAALKALVNQQVAAVVVQQPNFYGCLEEVEAIGAITHEQGAIFVVSADPLSLGVLAAPGSYGADIAVGEGQPLGSSQSFGGPYLGIFTVKQQLVRKIPGRLVGMTKDRDGEDGFILTLQTREQHIRREKATSNICSNQALNALQAAVYLSLLGKQGLQQVAAQSAQKAHYLANAIAALPGFSLKFTAPFFREFVVETPMPAAHLIEQMVEQRMFAGYDLATHGESGLLIAVTEQRTKEELDAFVAALSALKA.

It belongs to the GcvP family. N-terminal subunit subfamily. As to quaternary structure, the glycine cleavage system is composed of four proteins: P, T, L and H. In this organism, the P 'protein' is a heterodimer of two subunits.

It carries out the reaction N(6)-[(R)-lipoyl]-L-lysyl-[glycine-cleavage complex H protein] + glycine + H(+) = N(6)-[(R)-S(8)-aminomethyldihydrolipoyl]-L-lysyl-[glycine-cleavage complex H protein] + CO2. Its function is as follows. The glycine cleavage system catalyzes the degradation of glycine. The P protein binds the alpha-amino group of glycine through its pyridoxal phosphate cofactor; CO(2) is released and the remaining methylamine moiety is then transferred to the lipoamide cofactor of the H protein. This Chlorobium chlorochromatii (strain CaD3) protein is Probable glycine dehydrogenase (decarboxylating) subunit 1.